Consider the following 105-residue polypeptide: Met repressor (105 aa).

The protein belongs to the MetJ family. As to quaternary structure, homodimer.

It localises to the cytoplasm. Functionally, this regulatory protein, when combined with SAM (S-adenosylmethionine) represses the expression of the methionine regulon and of enzymes involved in SAM synthesis. The chain is Met repressor from Histophilus somni (strain 129Pt) (Haemophilus somnus).